A 283-amino-acid chain; its full sequence is Phosphatidylglycerol--prolipoprotein diacylglyceryl transferase (283 aa).

Helical transmembrane passes span 18-38, 59-79, 91-111, 124-144, 185-205, 213-233, and 251-271; these read LFGH…IILG, LAVY…VLFY, IFVT…IIIA, ILWV…MIRL, TQIY…WLYW, YSGL…FIIE, and GLNM…WLII. Residue arginine 143 participates in a 1,2-diacyl-sn-glycero-3-phospho-(1'-sn-glycerol) binding.

It belongs to the Lgt family.

The protein resides in the cell inner membrane. The enzyme catalyses L-cysteinyl-[prolipoprotein] + a 1,2-diacyl-sn-glycero-3-phospho-(1'-sn-glycerol) = an S-1,2-diacyl-sn-glyceryl-L-cysteinyl-[prolipoprotein] + sn-glycerol 1-phosphate + H(+). It functions in the pathway protein modification; lipoprotein biosynthesis (diacylglyceryl transfer). Its function is as follows. Catalyzes the transfer of the diacylglyceryl group from phosphatidylglycerol to the sulfhydryl group of the N-terminal cysteine of a prolipoprotein, the first step in the formation of mature lipoproteins. This is Phosphatidylglycerol--prolipoprotein diacylglyceryl transferase from Porphyromonas gingivalis (strain ATCC 33277 / DSM 20709 / CIP 103683 / JCM 12257 / NCTC 11834 / 2561).